Reading from the N-terminus, the 172-residue chain is RNA silencing suppressor p19 (172 aa).

A compositionally biased stretch (basic and acidic residues) spans 1–15 (MERAIQGNDAREQAY). Positions 1-37 (MERAIQGNDAREQAYGERWNGGSGSSTSPFKLPDESP) are disordered.

It belongs to the tombusvirus protein p19 family. As to quaternary structure, homodimer.

In terms of biological role, viral suppressor of RNA silencing which binds specifically to silencing RNAs (siRNAs). Acts as a molecular caliper to specifically select siRNAs based on the length of the duplex region of the RNA. This Capsicum annuum (Capsicum pepper) protein is RNA silencing suppressor p19.